The sequence spans 310 residues: Protein BIG GRAIN 1 (310 aa).

The interval 77–140 (SYRARAPGPH…EKKAKKPGAS (64 aa)) is disordered. Positions 90-106 (SSSSECSSYGGFSSSEA) are enriched in low complexity.

It belongs to the BIG GRAIN 1 (BG1) plant protein family. Mostly expressed in the vascular tissues of leaves, culms and young panicles, especially in hulls.

It is found in the cell membrane. Involved in auxin transport. Positive regulator of the auxin signaling pathway involved in gravitropism, plant growth and grain development. In Oryza sativa subsp. japonica (Rice), this protein is Protein BIG GRAIN 1.